The sequence spans 173 residues: Translation initiation factor IF-3 (173 aa).

It belongs to the IF-3 family. Monomer.

Its subcellular location is the cytoplasm. Its function is as follows. IF-3 binds to the 30S ribosomal subunit and shifts the equilibrium between 70S ribosomes and their 50S and 30S subunits in favor of the free subunits, thus enhancing the availability of 30S subunits on which protein synthesis initiation begins. In Neisseria gonorrhoeae (strain ATCC 700825 / FA 1090), this protein is Translation initiation factor IF-3.